We begin with the raw amino-acid sequence, 148 residues long: Large ribosomal subunit protein bL9 (148 aa).

It belongs to the bacterial ribosomal protein bL9 family.

Functionally, binds to the 23S rRNA. This is Large ribosomal subunit protein bL9 from Aeromonas salmonicida (strain A449).